A 414-amino-acid chain; its full sequence is Ribulose bisphosphate carboxylase large chain (414 aa).

Asn-101 and Thr-151 together coordinate substrate. Lys-153 (proton acceptor) is an active-site residue. Lys-155 serves as a coordination point for substrate. Residues Lys-179, Asp-181, and Glu-182 each coordinate Mg(2+). Lys-179 is modified (N6-carboxylysine). His-272 functions as the Proton acceptor in the catalytic mechanism. Substrate contacts are provided by Arg-273, His-305, and Ser-357.

Belongs to the RuBisCO large chain family. Type I subfamily. In terms of assembly, heterohexadecamer of 8 large chains and 8 small chains; disulfide-linked. The disulfide link is formed within the large subunit homodimers. The cofactor is Mg(2+). Post-translationally, the disulfide bond which can form in the large chain dimeric partners within the hexadecamer appears to be associated with oxidative stress and protein turnover.

The protein resides in the plastid. It localises to the chloroplast. It carries out the reaction 2 (2R)-3-phosphoglycerate + 2 H(+) = D-ribulose 1,5-bisphosphate + CO2 + H2O. It catalyses the reaction D-ribulose 1,5-bisphosphate + O2 = 2-phosphoglycolate + (2R)-3-phosphoglycerate + 2 H(+). Its function is as follows. RuBisCO catalyzes two reactions: the carboxylation of D-ribulose 1,5-bisphosphate, the primary event in carbon dioxide fixation, as well as the oxidative fragmentation of the pentose substrate in the photorespiration process. Both reactions occur simultaneously and in competition at the same active site. This chain is Ribulose bisphosphate carboxylase large chain (rbcL), found in Onychium japonicum (Japanese claw fern).